The sequence spans 368 residues: MARALRDISLFNDIRKDQNSAGAKHERYNMRDLRSKKNQHVNGIDDYEDDSLDRFIRRKKSRVVKYIPSLSAYNVFNEFPYYPTSASQLLDGKLDEFLMLSEQYKSRLPKIRKLGWNRFKPIGINKTMYELEMLRSRARAQNAEGNNEEDFRQHDSREEDPRNNGSIGRVILPHILQENEEYDTGEGVTGLHSMPNDSMAILANNSANNSQNEEVSEEDEISYDYDAEFDHVVDEDDNEEGEVPGEGVEGIEVQRERIVPDDLLMRPTSLSRSLQQFVEEAHHLDRNPYDIDSDNDGEDSKVELDMNPDFEDDVGREHDYNSEYSQEPTSYGGITPDLASNWRNWTRERITSLDELMERRARQQRGQD.

Disordered stretches follow at residues 140 to 167 and 286 to 336; these read AQNA…NGSI and RNPY…GITP. Over residues 149-162 the composition is skewed to basic and acidic residues; that stretch reads EDFRQHDSREEDPR. Ser293 carries the post-translational modification Phosphoserine.

The protein belongs to the APC15 family. In terms of assembly, the APC/C is composed of at least 13 subunits that stay tightly associated throughout the cell cycle: APC1, APC2, APC4, APC5, APC9, APC11, CDC16, CDC23, CDC26, CDC27, DOC1, MND2 and SWM1. MND2 interacts directly with APC1, APC5 and CDC23.

It participates in protein modification; protein ubiquitination. In terms of biological role, component of the anaphase promoting complex/cyclosome (APC/C), a cell cycle-regulated E3 ubiquitin-protein ligase complex that controls progression through mitosis and the G1 phase of the cell cycle. The APC/C is thought to confer substrate specificity and, in the presence of ubiquitin-conjugating E2 enzymes, it catalyzes the formation of protein-ubiquitin conjugates that are subsequently degraded by the 26S proteasome. In early mitosis, the APC/C is activated by CDC20 and targets securin PDS1, the B-type cyclin CLB5, and other anaphase inhibitory proteins for proteolysis, thereby triggering the separation of sister chromatids at the metaphase-to-anaphase transition. In late mitosis and in G1, degradation of CLB5 allows activation of the APC/C by CDH1, which is needed to destroy CDC20 and the B-type cyclin CLB2 to allow exit from mitosis and creating the low CDK state necessary for cytokinesis and for reforming prereplicative complexes in G1 prior to another round of replication. The chain is Anaphase-promoting complex subunit MND2 (MND2) from Saccharomyces cerevisiae (strain ATCC 204508 / S288c) (Baker's yeast).